Consider the following 589-residue polypeptide: Polypeptide N-acetylgalactosaminyltransferase 4 (589 aa).

Topologically, residues methionine 1–valine 11 are cytoplasmic. Residues glycine 12–threonine 31 form a helical; Signal-anchor for type II membrane protein membrane-spanning segment. The Lumenal portion of the chain corresponds to serine 32–glutamate 589. The interval serine 33 to threonine 73 is disordered. Intrachain disulfides connect cysteine 140–cysteine 369, cysteine 360–cysteine 438, cysteine 471–cysteine 488, cysteine 514–cysteine 531, and cysteine 553–cysteine 571. The interval methionine 150–arginine 255 is catalytic subdomain A. Aspartate 191 and arginine 216 together coordinate substrate. Mn(2+) is bound at residue aspartate 239. Residue serine 240 participates in substrate binding. Histidine 241 provides a ligand contact to Mn(2+). Positions proline 315–arginine 377 are catalytic subdomain B. Position 346 (tryptophan 346) interacts with substrate. Residue histidine 374 participates in Mn(2+) binding. Positions 377, 380, and 382 each coordinate substrate. Residues threonine 458–glutamate 589 form the Ricin B-type lectin domain. An N-linked (GlcNAc...) asparagine glycan is attached at asparagine 523.

This sequence belongs to the glycosyltransferase 2 family. GalNAc-T subfamily. Requires Mn(2+) as cofactor.

The protein resides in the golgi apparatus membrane. The catalysed reaction is L-seryl-[protein] + UDP-N-acetyl-alpha-D-galactosamine = a 3-O-[N-acetyl-alpha-D-galactosaminyl]-L-seryl-[protein] + UDP + H(+). The enzyme catalyses L-threonyl-[protein] + UDP-N-acetyl-alpha-D-galactosamine = a 3-O-[N-acetyl-alpha-D-galactosaminyl]-L-threonyl-[protein] + UDP + H(+). It functions in the pathway protein modification; protein glycosylation. In terms of biological role, catalyzes the initial reaction in O-linked oligosaccharide biosynthesis, the transfer of an N-acetyl-D-galactosamine residue to a serine or threonine residue on the protein receptor. This Caenorhabditis elegans protein is Polypeptide N-acetylgalactosaminyltransferase 4 (gly-4).